Here is a 454-residue protein sequence, read N- to C-terminus: Maintenance of mitochondrial morphology protein 1 (454 aa).

Topologically, residues 1–117 are lumenal; it reads MESNYTGMDG…SFSSWSFAQG (117 aa). The chain crosses the membrane as a helical span at residues 118–138; the sequence is LIVGQVSVVLVLIFFIKFFIF. The Cytoplasmic segment spans residues 139–454; the sequence is SDSSTKTNPN…ESEPGRETHY (316 aa). A disordered region spans residues 144 to 164; sequence KTNPNPAKNSSSTNSLSGLSS. Low complexity predominate over residues 153-164; that stretch reads SSSTNSLSGLSS. Residues 215–427 enclose the SMP-LTD domain; it reads PAESLDWFNV…EPRFQFIKLP (213 aa). Arg253, Trp411, Arg415, Trp430, Arg432, and Ser433 together coordinate a 1,2-diacyl-sn-glycero-3-phosphate. The interval 434 to 454 is disordered; that stretch reads KNTREGKADVDESEPGRETHY. A compositionally biased stretch (basic and acidic residues) spans 435–454; sequence NTREGKADVDESEPGRETHY.

It belongs to the MMM1 family. Homodimer. Component of the ER-mitochondria encounter structure (ERMES) or MDM complex, composed of MMM1, MDM10, MDM12 and MDM34. An MMM1 homodimer associates with one molecule of MDM12 on each side in a pairwise head-to-tail manner, and the SMP-LTD domains of MMM1 and MDM12 generate a continuous hydrophobic tunnel for phospholipid trafficking.

The protein localises to the endoplasmic reticulum membrane. In terms of biological role, component of the ERMES/MDM complex, which serves as a molecular tether to connect the endoplasmic reticulum (ER) and mitochondria. Components of this complex are involved in the control of mitochondrial shape and protein biogenesis, and function in nonvesicular lipid trafficking between the ER and mitochondria. Preferentially binds to glycerophospholipids such as phosphatidylcholoine (PC), phosphatidic acid (PA), phosphatidylglycerol (PG), and phosphatidylserine (PS), but not to phosphatidylethanolamine (PE). The MDM12-MMM1 subcomplex functions in the major beta-barrel assembly pathway that is responsible for biogenesis of all outer membrane beta-barrel proteins, and acts in a late step after the SAM complex. The MDM10-MDM12-MMM1 subcomplex further acts in the TOM40-specific pathway after the action of the MDM12-MMM1 complex. Essential for establishing and maintaining the structure of mitochondria and maintenance of mtDNA nucleoids. The chain is Maintenance of mitochondrial morphology protein 1 from Zygosaccharomyces rouxii (strain ATCC 2623 / CBS 732 / NBRC 1130 / NCYC 568 / NRRL Y-229).